The chain runs to 262 residues: Indole-3-glycerol phosphate synthase (262 aa).

Belongs to the TrpC family.

The catalysed reaction is 1-(2-carboxyphenylamino)-1-deoxy-D-ribulose 5-phosphate + H(+) = (1S,2R)-1-C-(indol-3-yl)glycerol 3-phosphate + CO2 + H2O. Its pathway is amino-acid biosynthesis; L-tryptophan biosynthesis; L-tryptophan from chorismate: step 4/5. The protein is Indole-3-glycerol phosphate synthase of Thiobacillus denitrificans (strain ATCC 25259 / T1).